The chain runs to 98 residues: Aspartyl/glutamyl-tRNA(Asn/Gln) amidotransferase subunit C (98 aa).

It belongs to the GatC family. As to quaternary structure, heterotrimer of A, B and C subunits.

The enzyme catalyses L-glutamyl-tRNA(Gln) + L-glutamine + ATP + H2O = L-glutaminyl-tRNA(Gln) + L-glutamate + ADP + phosphate + H(+). It catalyses the reaction L-aspartyl-tRNA(Asn) + L-glutamine + ATP + H2O = L-asparaginyl-tRNA(Asn) + L-glutamate + ADP + phosphate + 2 H(+). In terms of biological role, allows the formation of correctly charged Asn-tRNA(Asn) or Gln-tRNA(Gln) through the transamidation of misacylated Asp-tRNA(Asn) or Glu-tRNA(Gln) in organisms which lack either or both of asparaginyl-tRNA or glutaminyl-tRNA synthetases. The reaction takes place in the presence of glutamine and ATP through an activated phospho-Asp-tRNA(Asn) or phospho-Glu-tRNA(Gln). This chain is Aspartyl/glutamyl-tRNA(Asn/Gln) amidotransferase subunit C, found in Micrococcus luteus (strain ATCC 4698 / DSM 20030 / JCM 1464 / CCM 169 / CCUG 5858 / IAM 1056 / NBRC 3333 / NCIMB 9278 / NCTC 2665 / VKM Ac-2230) (Micrococcus lysodeikticus).